The following is a 277-amino-acid chain: Large ribosomal subunit protein uL2 (277 aa).

Disordered stretches follow at residues 32-58 and 225-277; these read KSLT…RGGG and VAMN…RRNN.

Belongs to the universal ribosomal protein uL2 family. As to quaternary structure, part of the 50S ribosomal subunit. Forms a bridge to the 30S subunit in the 70S ribosome.

In terms of biological role, one of the primary rRNA binding proteins. Required for association of the 30S and 50S subunits to form the 70S ribosome, for tRNA binding and peptide bond formation. It has been suggested to have peptidyltransferase activity; this is somewhat controversial. Makes several contacts with the 16S rRNA in the 70S ribosome. The protein is Large ribosomal subunit protein uL2 of Borrelia recurrentis (strain A1).